The primary structure comprises 352 residues: Putative GATA transcription factor 22 (352 aa).

The disordered stretch occupies residues 27 to 53 (SLHHHLQQQQQQQQHFHHQASSNPSSL). The segment covering 33-53 (QQQQQQQQHFHHQASSNPSSL) has biased composition (low complexity). The short motif at 112–119 (PKKETRLK) is the Nuclear localization signal element. A disordered region spans residues 163–189 (AIITTSDSSKQHTNNDQSSNLSNSERQ). Over residues 165 to 189 (ITTSDSSKQHTNNDQSSNLSNSERQ) the composition is skewed to polar residues. The segment at 195–249 (DCVIRICSDCNTTKTPLWRSGPRGPKSLCNACGIRQRKARRAAMATATATAVSGV) adopts a GATA-type zinc-finger fold.

Belongs to the type IV zinc-finger family. Class B subfamily. As to quaternary structure, forms heterodimers with GATA18. In terms of tissue distribution, expressed predominantly in leaves, and barely in stems, flowers and siliques.

It localises to the nucleus. In terms of biological role, transcriptional regulator that specifically binds 5'-GATA-3' or 5'-GAT-3' motifs within gene promoters. Involved in the modulation of chloroplast development, growth and division in a cytokinin-dependent manner. Repressor of the gibberellic acid (GA) signaling pathway that regulates flowering and modulates greening, in a SOC1-dependent manner. Prevents the accumulation of SOC1 during flowering. Promotes chlorophyll biosynthesis throughout the plant, by regulating chlorophyll biosynthetic genes (e.g. HEMA1 and GUN4) and chloroplast localized glutamate synthase (e.g. GLU1). Involved in the regulation of sugar-sensing genes (e.g. HXK1, HXK2, STP13 and PLT6). Regulator of germination, senescence, elongation growth and flowering time. Influences also leaf starch content. The protein is Putative GATA transcription factor 22 of Arabidopsis thaliana (Mouse-ear cress).